Reading from the N-terminus, the 510-residue chain is Bifunctional pantoate ligase/cytidylate kinase (510 aa).

Residues Met1–Val276 are pantoate--beta-alanine ligase. Met29–His36 is a binding site for ATP. The Proton donor role is filled by His36. A (R)-pantoate-binding site is contributed by Gln61. Gln61 contributes to the beta-alanine binding site. Gly150–Asp153 contributes to the ATP binding site. Gln156 serves as a coordination point for (R)-pantoate. Position 187-190 (Leu187–Arg190) interacts with ATP. The interval Phe277–Arg510 is cytidylate kinase.

This sequence in the N-terminal section; belongs to the pantothenate synthetase family. In the C-terminal section; belongs to the cytidylate kinase family. Type 1 subfamily.

It is found in the cytoplasm. It catalyses the reaction (R)-pantoate + beta-alanine + ATP = (R)-pantothenate + AMP + diphosphate + H(+). The catalysed reaction is CMP + ATP = CDP + ADP. The enzyme catalyses dCMP + ATP = dCDP + ADP. It functions in the pathway cofactor biosynthesis; (R)-pantothenate biosynthesis; (R)-pantothenate from (R)-pantoate and beta-alanine: step 1/1. Its function is as follows. Catalyzes the condensation of pantoate with beta-alanine in an ATP-dependent reaction via a pantoyl-adenylate intermediate. Catalyzes the transfer of a phosphate group from ATP to either CMP or dCMP to form CDP or dCDP and ADP, respectively. The chain is Bifunctional pantoate ligase/cytidylate kinase from Prochlorococcus marinus (strain MIT 9312).